The following is a 413-amino-acid chain: Serine--tRNA ligase (413 aa).

Residue 221–223 (TAE) participates in L-serine binding. 252–254 (RRE) provides a ligand contact to ATP. Glutamate 275 is an L-serine binding site. 339-342 (EVSS) contributes to the ATP binding site. Position 375 (serine 375) interacts with L-serine.

The protein belongs to the class-II aminoacyl-tRNA synthetase family. Type-1 seryl-tRNA synthetase subfamily. In terms of assembly, homodimer. The tRNA molecule binds across the dimer.

It localises to the cytoplasm. It carries out the reaction tRNA(Ser) + L-serine + ATP = L-seryl-tRNA(Ser) + AMP + diphosphate + H(+). It catalyses the reaction tRNA(Sec) + L-serine + ATP = L-seryl-tRNA(Sec) + AMP + diphosphate + H(+). It functions in the pathway aminoacyl-tRNA biosynthesis; selenocysteinyl-tRNA(Sec) biosynthesis; L-seryl-tRNA(Sec) from L-serine and tRNA(Sec): step 1/1. Functionally, catalyzes the attachment of serine to tRNA(Ser). Is also able to aminoacylate tRNA(Sec) with serine, to form the misacylated tRNA L-seryl-tRNA(Sec), which will be further converted into selenocysteinyl-tRNA(Sec). In Dehalococcoides mccartyi (strain ATCC BAA-2266 / KCTC 15142 / 195) (Dehalococcoides ethenogenes (strain 195)), this protein is Serine--tRNA ligase.